The following is an 83-amino-acid chain: Large ribosomal subunit protein eL43 (83 aa).

The Zn(2+) site is built by Cys-38, Cys-41, Cys-56, and Cys-59. Residues 38 to 59 (CPVCGRKAVKRISTGIWQCQKC) form a C4-type zinc finger.

This sequence belongs to the eukaryotic ribosomal protein eL43 family. Putative zinc-binding subfamily. Part of the 50S ribosomal subunit. The cofactor is Zn(2+).

Functionally, binds to the 23S rRNA. The polypeptide is Large ribosomal subunit protein eL43 (Pyrococcus furiosus (strain ATCC 43587 / DSM 3638 / JCM 8422 / Vc1)).